A 349-amino-acid chain; its full sequence is Green-sensitive opsin-3 (349 aa).

The Extracellular portion of the chain corresponds to 1 to 36; it reads MNGTEGNNFYIPMSNRTGLVRSPYEYPQYYLAEPWQ. 2 N-linked (GlcNAc...) asparagine glycosylation sites follow: Asn2 and Asn15. A helical transmembrane segment spans residues 37–61; the sequence is FKLLAVYMFFLMCFGFPINGLTLVV. The Cytoplasmic segment spans residues 62 to 73; it reads TAQHKKLRQPLN. Residues 74 to 99 traverse the membrane as a helical segment; that stretch reads FILVNLAVAGTIMVCFGFTVTFYTAI. The Extracellular portion of the chain corresponds to 100-113; that stretch reads NGYFVLGPTGCAIE. The cysteines at positions 110 and 187 are disulfide-linked. The chain crosses the membrane as a helical span at residues 114–133; it reads GFMATLGGQISLWSLVVLAI. Topologically, residues 134–152 are cytoplasmic; sequence ERYIVVCKPMGSFKFSSNH. The helical transmembrane segment at 153–176 threads the bilayer; it reads AFAGIGFTWIMALSCAAPPLVGWS. The Extracellular segment spans residues 177-202; sequence RYIPEGMQCSCGPDYYTLNPDYNNES. An N-linked (GlcNAc...) asparagine glycan is attached at Asn200. A helical transmembrane segment spans residues 203-230; it reads YVLYMFCCHFIFPVTTIFFTYGRLVCTV. The Cytoplasmic segment spans residues 231–252; the sequence is KAAAAQQQESESTQKAEREVTR. Residues 253–276 traverse the membrane as a helical segment; that stretch reads MVILMVLGFLVAWTPYASVAAWIF. The Extracellular portion of the chain corresponds to 277–284; sequence FNRGAAFS. Residues 285–309 form a helical membrane-spanning segment; the sequence is AQFMAVPAFFSKSSSIFNPIIYVLL. Lys296 bears the N6-(retinylidene)lysine mark. At 310-349 the chain is on the cytoplasmic side; that stretch reads NKQFRNCMLTTLFCGKNPLGDDESSTVSTSKTEVSSVSPA. Positions 329-349 are disordered; sequence GDDESSTVSTSKTEVSSVSPA. A compositionally biased stretch (low complexity) spans 334-349; sequence STVSTSKTEVSSVSPA.

This sequence belongs to the G-protein coupled receptor 1 family. Opsin subfamily. Phosphorylated on some or all of the serine and threonine residues present in the C-terminal region.

The protein resides in the membrane. Its function is as follows. Visual pigments are the light-absorbing molecules that mediate vision. They consist of an apoprotein, opsin, covalently linked to cis-retinal. This Danio rerio (Zebrafish) protein is Green-sensitive opsin-3 (opn1mw3).